The sequence spans 1070 residues: DNA-directed RNA polymerase subunit beta (1070 aa).

It belongs to the RNA polymerase beta chain family. As to quaternary structure, in plastids the minimal PEP RNA polymerase catalytic core is composed of four subunits: alpha, beta, beta', and beta''. When a (nuclear-encoded) sigma factor is associated with the core the holoenzyme is formed, which can initiate transcription.

Its subcellular location is the plastid. It is found in the chloroplast. It carries out the reaction RNA(n) + a ribonucleoside 5'-triphosphate = RNA(n+1) + diphosphate. Its function is as follows. DNA-dependent RNA polymerase catalyzes the transcription of DNA into RNA using the four ribonucleoside triphosphates as substrates. The protein is DNA-directed RNA polymerase subunit beta of Piper cenocladum (Ant piper).